Reading from the N-terminus, the 364-residue chain is Selection and upkeep of intraepithelial T-cells protein 11 (364 aa).

An N-terminal signal peptide occupies residues 1–28; that stretch reads MEPSASCLPGFFMVCILLKITVLTQVMS. Residues 29–118 enclose the Ig-like V-type domain; sequence LDIQINTQIP…TNQEKRRSII (90 aa). The Extracellular segment spans residues 29-138; it reads LDIQINTQIP…MSLMSNNLLY (110 aa). Cys48 and Cys102 are joined by a disulfide. The helical transmembrane segment at 139–159 threads the bilayer; it reads LGIYLIFILFLNFLKGILFCL. At 160 to 186 the chain is on the cytoplasmic side; the sequence is TKRLVHFRKRMIKIKKVWSNKTRACCP. Residues 187–207 traverse the membrane as a helical segment; the sequence is LIWEFLEIVLFIAFLPLYLMF. At 208–230 the chain is on the extracellular side; it reads RIRVFTLDEAHILYNNWLWKVCK. The chain crosses the membrane as a helical span at residues 231–251; that stretch reads TLIAMMILFTVLILFLLWTLN. The Cytoplasmic segment spans residues 252–364; sequence RYGKMPCLSS…LYSKLGNLTH (113 aa).

Belongs to the SKINT family. In terms of tissue distribution, expressed in skin and thymus.

Its subcellular location is the membrane. In terms of biological role, may act by engaging a cell surface molecule on immature T-cells in the embryonic thymus. In Mus musculus (Mouse), this protein is Selection and upkeep of intraepithelial T-cells protein 11 (Skint11).